We begin with the raw amino-acid sequence, 115 residues long: MEKMLLKSTTRHVRIFTAEVVNNDLKYHPNKLTLDLDPDNEFIWNEESLKKVNQKFTELVEERAGKSLDDYELRKIGSEVEGLIKYLLQNSLLSYNPECRVMNYSMGLPKTKEVL.

This sequence belongs to the complex I NdhM subunit family. NDH-1 can be composed of about 15 different subunits; different subcomplexes with different compositions have been identified which probably have different functions.

The protein resides in the cellular thylakoid membrane. It carries out the reaction a plastoquinone + NADH + (n+1) H(+)(in) = a plastoquinol + NAD(+) + n H(+)(out). The enzyme catalyses a plastoquinone + NADPH + (n+1) H(+)(in) = a plastoquinol + NADP(+) + n H(+)(out). In terms of biological role, NDH-1 shuttles electrons from an unknown electron donor, via FMN and iron-sulfur (Fe-S) centers, to quinones in the respiratory and/or the photosynthetic chain. The immediate electron acceptor for the enzyme in this species is believed to be plastoquinone. Couples the redox reaction to proton translocation, and thus conserves the redox energy in a proton gradient. Cyanobacterial NDH-1 also plays a role in inorganic carbon-concentration. This Prochlorococcus marinus (strain MIT 9515) protein is NAD(P)H-quinone oxidoreductase subunit M.